We begin with the raw amino-acid sequence, 149 residues long: Bis(5'-adenosyl)-triphosphatase (149 aa).

Positions 2 to 109 (SFRFGQHLIK…LPRKAGDFHR (108 aa)) constitute an HIT domain. Substrate is bound by residues His8, Asn27, Gln83, and 89–92 (GQTV). The Histidine triad motif motif lies at 94-98 (HVHVH). The active-site Tele-AMP-histidine intermediate is the His96. His98 provides a ligand contact to substrate. Residues Tyr114 and Tyr147 each carry the phosphotyrosine modification.

In terms of assembly, homodimer. Interacts with UBE2I. Interacts with MDM2. Interacts with CTNNB1. Identified in a complex with CTNNB1 and LEF1. Post-translationally, phosphorylation at Tyr-114 by SRC is required for induction of apoptosis. In terms of tissue distribution, expressed in the brain, kidney, spleen, testis and lung.

The protein resides in the cytoplasm. The protein localises to the nucleus. Its subcellular location is the mitochondrion. It catalyses the reaction P(1),P(3)-bis(5'-adenosyl) triphosphate + H2O = AMP + ADP + 2 H(+). It carries out the reaction adenosine 5'-phosphosulfate + H2O = sulfate + AMP + 2 H(+). The catalysed reaction is adenosine 5'-phosphosulfate + NH4(+) = adenosine 5'-phosphoramidate + sulfate + 2 H(+). The enzyme catalyses adenosine 5'-phosphoramidate + H2O = AMP + NH4(+). Functionally, possesses dinucleoside triphosphate hydrolase activity. Cleaves P(1)-P(3)-bis(5'-adenosyl) triphosphate (Ap3A) to yield AMP and ADP. Can also hydrolyze P(1)-P(4)-bis(5'-adenosyl) tetraphosphate (Ap4A), but has extremely low activity with ATP. Exhibits adenylylsulfatase activity, hydrolyzing adenosine 5'-phosphosulfate to yield AMP and sulfate. Exhibits adenosine 5'-monophosphoramidase activity, hydrolyzing purine nucleotide phosphoramidates with a single phosphate group such as adenosine 5'monophosphoramidate (AMP-NH2) to yield AMP and NH2. Exhibits adenylylsulfate-ammonia adenylyltransferase, catalyzing the ammonolysis of adenosine 5'-phosphosulfate resulting in the formation of adenosine 5'-phosphoramidate. Also catalyzes the ammonolysis of adenosine 5-phosphorofluoridate and diadenosine triphosphate. Modulates transcriptional activation by CTNNB1 and thereby contributes to regulate the expression of genes essential for cell proliferation and survival, such as CCND1 and BIRC5. Plays a role in the induction of apoptosis via SRC and AKT1 signaling pathways. Inhibits MDM2-mediated proteasomal degradation of p53/TP53 and thereby plays a role in p53/TP53-mediated apoptosis. Induction of apoptosis depends on the ability of FHIT to bind P(1)-P(3)-bis(5'-adenosyl) triphosphate or related compounds, but does not require its catalytic activity Functions as a tumor suppressor. In Bos taurus (Bovine), this protein is Bis(5'-adenosyl)-triphosphatase (FHIT).